The sequence spans 176 residues: Small ribosomal subunit protein uS5 (176 aa).

One can recognise an S5 DRBM domain in the interval L11–V74.

This sequence belongs to the universal ribosomal protein uS5 family. As to quaternary structure, part of the 30S ribosomal subunit. Contacts proteins S4 and S8.

Functionally, with S4 and S12 plays an important role in translational accuracy. Its function is as follows. Located at the back of the 30S subunit body where it stabilizes the conformation of the head with respect to the body. This Rickettsia akari (strain Hartford) protein is Small ribosomal subunit protein uS5.